The following is a 264-amino-acid chain: MEMO1 family protein Mbur_2394 (264 aa).

Belongs to the MEMO1 family.

This Methanococcoides burtonii (strain DSM 6242 / NBRC 107633 / OCM 468 / ACE-M) protein is MEMO1 family protein Mbur_2394.